The chain runs to 502 residues: MLAAMGSLAAALWAVVHPRTLLLGTVAFLLAADFLKRRRPKNYPPGPWRLPFLGNFFLVDFEQSHLEVQLFVKKYGNLFSLELGDISAVLITGLPLIKEALIHMDQNFGNRPVTPMREHIFKKNGLIMSSGQAWKEQRRFTLTALRNFGLGKKSLEERIQEEAQHLTEAIKEENGQPFDPHFKINNAVSNIICSITFGERFEYQDSWFQQLLKLLDEVTYLEASKTCQLYNVFPWIMKFLPGPHQTLFSNWKKLKLFVSHMIDKHRKDWNPAETRDFIDAYLKEMSKHTGNPTSSFHEENLICSTLDLFFAGTETTSTTLRWALLYMALYPEIQEKVQAEIDRVIGQGQQPSTAARESMPYTNAVIHEVQRMGNIIPLNVPREVTVDTTLAGYHLPKGTMILTNLTALHRDPTEWATPDTFNPDHFLENGQFKKREAFMPFSIGKRACLGEQLARTELFIFFTSLMQKFTFRPPNNEKLSLKFRMGITISPVSHRLCAVPQV.

Cys448 contacts heme.

Belongs to the cytochrome P450 family. Heme is required as a cofactor. Highly expressed in heart, present at lower levels in liver, kidney and skeletal muscle (at protein level).

The protein localises to the endoplasmic reticulum membrane. The protein resides in the microsome membrane. The enzyme catalyses (5Z,8Z,11Z,14Z)-eicosatetraenoate + reduced [NADPH--hemoprotein reductase] + O2 = 5,6-epoxy-(8Z,11Z,14Z)-eicosatrienoate + oxidized [NADPH--hemoprotein reductase] + H2O + H(+). It catalyses the reaction (5Z,8Z,11Z,14Z)-eicosatetraenoate + reduced [NADPH--hemoprotein reductase] + O2 = (8R,9S)-epoxy-(5Z,11Z,14Z)-eicosatrienoate + oxidized [NADPH--hemoprotein reductase] + H2O + H(+). It carries out the reaction (5Z,8Z,11Z,14Z)-eicosatetraenoate + reduced [NADPH--hemoprotein reductase] + O2 = (8S,9R)-epoxy-(5Z,11Z,14Z)-eicosatrienoate + oxidized [NADPH--hemoprotein reductase] + H2O + H(+). The catalysed reaction is (5Z,8Z,11Z,14Z)-eicosatetraenoate + reduced [NADPH--hemoprotein reductase] + O2 = (11R,12S)-epoxy-(5Z,8Z,14Z)-eicosatrienoate + oxidized [NADPH--hemoprotein reductase] + H2O + H(+). The enzyme catalyses (5Z,8Z,11Z,14Z)-eicosatetraenoate + reduced [NADPH--hemoprotein reductase] + O2 = (11S,12R)-epoxy-(5Z,8Z,14Z)-eicosatrienoate + oxidized [NADPH--hemoprotein reductase] + H2O + H(+). It catalyses the reaction (5Z,8Z,11Z,14Z)-eicosatetraenoate + reduced [NADPH--hemoprotein reductase] + O2 = (14R,15S)-epoxy-(5Z,8Z,11Z)-eicosatrienoate + oxidized [NADPH--hemoprotein reductase] + H2O + H(+). It carries out the reaction (5Z,8Z,11Z,14Z)-eicosatetraenoate + reduced [NADPH--hemoprotein reductase] + O2 = (14S,15R)-epoxy-(5Z,8Z,11Z)-eicosatrienoate + oxidized [NADPH--hemoprotein reductase] + H2O + H(+). The catalysed reaction is (15S)-hydroperoxy-(5Z,8Z,11Z,13E)-eicosatetraenoate = (13S)-hydroxy-(14S,15S)-epoxy-(5Z,8Z,11Z)-eicosatrienoate. The enzyme catalyses (15S)-hydroperoxy-(5Z,8Z,11Z,13E)-eicosatetraenoate = (13R)-hydroxy-(14S,15S)-epoxy-(5Z,8Z,11Z)-eicosatrienoate. It catalyses the reaction (5Z,8Z,11Z,14Z,17Z)-eicosapentaenoate + reduced [NADPH--hemoprotein reductase] + O2 = (17R,18S)-epoxy-(5Z,8Z,11Z,14Z)-eicosatetraenoate + oxidized [NADPH--hemoprotein reductase] + H2O + H(+). It carries out the reaction (5Z,8Z,11Z,14Z,17Z)-eicosapentaenoate + reduced [NADPH--hemoprotein reductase] + O2 = (17S,18R)-epoxy-(5Z,8Z,11Z,14Z)-eicosatetraenoate + oxidized [NADPH--hemoprotein reductase] + H2O + H(+). The catalysed reaction is (4Z,7Z,10Z,13Z,16Z,19Z)-docosahexaenoate + reduced [NADPH--hemoprotein reductase] + O2 = (19R,20S)-epoxy-(4Z,7Z,10Z,13Z,16Z)-docosapentaenoate + oxidized [NADPH--hemoprotein reductase] + H2O + H(+). The enzyme catalyses (4Z,7Z,10Z,13Z,16Z,19Z)-docosahexaenoate + reduced [NADPH--hemoprotein reductase] + O2 = (19S,20R)-epoxy-(4Z,7Z,10Z,13Z,16Z)-docosapentaenoate + oxidized [NADPH--hemoprotein reductase] + H2O + H(+). It catalyses the reaction albendazole + reduced [NADPH--hemoprotein reductase] + O2 = hydroxyalbendazole + oxidized [NADPH--hemoprotein reductase] + H2O + H(+). It carries out the reaction albendazole + reduced [NADPH--hemoprotein reductase] + O2 = albendazole S-oxide + oxidized [NADPH--hemoprotein reductase] + H2O + H(+). The catalysed reaction is fenbendazole + reduced [NADPH--hemoprotein reductase] + O2 = fenbendazole S-oxide + oxidized [NADPH--hemoprotein reductase] + H2O + H(+). It participates in lipid metabolism; arachidonate metabolism. Its function is as follows. A cytochrome P450 monooxygenase involved in the metabolism of polyunsaturated fatty acids (PUFA) in the cardiovascular system. Mechanistically, uses molecular oxygen inserting one oxygen atom into a substrate, and reducing the second into a water molecule, with two electrons provided by NADPH via cytochrome P450 reductase (NADPH--hemoprotein reductase). Catalyzes the epoxidation of double bonds of PUFA. Converts arachidonic acid to four regioisomeric epoxyeicosatrienoic acids (EpETrE), likely playing a major role in the epoxidation of endogenous cardiac arachidonic acid pools. In endothelial cells, participates in eicosanoids metabolism by converting hydroperoxide species into hydroxy epoxy metabolites. In combination with 15-lipoxygenase metabolizes arachidonic acid and converts hydroperoxyicosatetraenoates (HpETEs) into hydroxy epoxy eicosatrienoates (HEETs), which are precursors of vasodilatory trihydroxyicosatrienoic acids (THETAs). This hydroperoxide isomerase activity is NADPH- and O2-independent. Catalyzes the monooxygenation of a various xenobiotics, such as danazol, amiodarone, terfenadine, astemizole, thioridazine, tamoxifen, cyclosporin A and nabumetone. Catalyzes hydroxylation of the anthelmintics albendazole and fenbendazole. Catalyzes the sulfoxidation of fenbedazole. The chain is Cytochrome P450 2J2 from Homo sapiens (Human).